The chain runs to 79 residues: Conotoxin Leo-O4 (79 aa).

The N-terminal stretch at 1–22 (MKLTCMMLVAVLFLTAWTFVTA) is a signal peptide. Residues 23 to 51 (NVSRNGLENLFPEERHEMMNPNAAKLNNR) constitute a propeptide that is removed on maturation. 3 disulfide bridges follow: Cys-53–Cys-70, Cys-60–Cys-74, and Cys-69–Cys-78.

This sequence belongs to the conotoxin O1 superfamily. Expressed by the venom duct.

It localises to the secreted. In Conus leopardus (Leopard cone), this protein is Conotoxin Leo-O4.